A 188-amino-acid chain; its full sequence is Ribonuclease HII (188 aa).

One can recognise an RNase H type-2 domain in the interval 6–188 (KPLCGIDEAG…VKGLDEPTLF (183 aa)). D12, E13, and D99 together coordinate a divalent metal cation.

Belongs to the RNase HII family. Requires Mn(2+) as cofactor. Mg(2+) serves as cofactor.

It localises to the cytoplasm. The enzyme catalyses Endonucleolytic cleavage to 5'-phosphomonoester.. Its function is as follows. Endonuclease that specifically degrades the RNA of RNA-DNA hybrids. In Sulfurovum sp. (strain NBC37-1), this protein is Ribonuclease HII.